The chain runs to 426 residues: Enolase (426 aa).

A (2R)-2-phosphoglycerate-binding site is contributed by Gln163. The active-site Proton donor is Glu205. Mg(2+) is bound by residues Asp242, Glu283, and Asp310. 4 residues coordinate (2R)-2-phosphoglycerate: Lys335, Arg364, Ser365, and Lys386. Lys335 (proton acceptor) is an active-site residue.

The protein belongs to the enolase family. It depends on Mg(2+) as a cofactor.

It localises to the cytoplasm. The protein resides in the secreted. Its subcellular location is the cell surface. It carries out the reaction (2R)-2-phosphoglycerate = phosphoenolpyruvate + H2O. It functions in the pathway carbohydrate degradation; glycolysis; pyruvate from D-glyceraldehyde 3-phosphate: step 4/5. Functionally, catalyzes the reversible conversion of 2-phosphoglycerate (2-PG) into phosphoenolpyruvate (PEP). It is essential for the degradation of carbohydrates via glycolysis. The protein is Enolase of Clavibacter michiganensis subsp. michiganensis (strain NCPPB 382).